The primary structure comprises 159 residues: Endoribonuclease YbeY (159 aa).

The Zn(2+) site is built by histidine 117, histidine 121, and histidine 127.

The protein belongs to the endoribonuclease YbeY family. Zn(2+) serves as cofactor.

It localises to the cytoplasm. Functionally, single strand-specific metallo-endoribonuclease involved in late-stage 70S ribosome quality control and in maturation of the 3' terminus of the 16S rRNA. The protein is Endoribonuclease YbeY of Azorhizobium caulinodans (strain ATCC 43989 / DSM 5975 / JCM 20966 / LMG 6465 / NBRC 14845 / NCIMB 13405 / ORS 571).